Consider the following 281-residue polypeptide: 33 kDa chaperonin (281 aa).

2 disulfide bridges follow: cysteine 229–cysteine 231 and cysteine 262–cysteine 265.

The protein belongs to the HSP33 family. Post-translationally, under oxidizing conditions two disulfide bonds are formed involving the reactive cysteines. Under reducing conditions zinc is bound to the reactive cysteines and the protein is inactive.

It localises to the cytoplasm. Functionally, redox regulated molecular chaperone. Protects both thermally unfolding and oxidatively damaged proteins from irreversible aggregation. Plays an important role in the bacterial defense system toward oxidative stress. This is 33 kDa chaperonin from Pseudoalteromonas translucida (strain TAC 125).